Consider the following 263-residue polypeptide: Ribonuclease HII (263 aa).

Residues 74–262 (EHVAGLDEVG…VQETAATRQT (189 aa)) form the RNase H type-2 domain. A divalent metal cation contacts are provided by aspartate 80, glutamate 81, and aspartate 172.

Belongs to the RNase HII family. The cofactor is Mn(2+). Mg(2+) serves as cofactor.

The protein resides in the cytoplasm. The enzyme catalyses Endonucleolytic cleavage to 5'-phosphomonoester.. Functionally, endonuclease that specifically degrades the RNA of RNA-DNA hybrids. The chain is Ribonuclease HII (rnhB) from Halalkalibacterium halodurans (strain ATCC BAA-125 / DSM 18197 / FERM 7344 / JCM 9153 / C-125) (Bacillus halodurans).